A 316-amino-acid chain; its full sequence is Ornithine carbamoyltransferase (316 aa).

Carbamoyl phosphate contacts are provided by residues 57–60, Gln84, Arg108, and 135–138; these read STRT and HPCQ. L-ornithine contacts are provided by residues Asn166, Asp230, and 234–235; that span reads SM. Carbamoyl phosphate contacts are provided by residues 269 to 270 and Arg297; that span reads CL.

This sequence belongs to the aspartate/ornithine carbamoyltransferase superfamily. OTCase family.

Its subcellular location is the cytoplasm. It carries out the reaction carbamoyl phosphate + L-ornithine = L-citrulline + phosphate + H(+). The protein operates within amino-acid degradation; L-arginine degradation via ADI pathway; carbamoyl phosphate from L-arginine: step 2/2. Functionally, reversibly catalyzes the transfer of the carbamoyl group from carbamoyl phosphate (CP) to the N(epsilon) atom of ornithine (ORN) to produce L-citrulline. The chain is Ornithine carbamoyltransferase from Bacillus cereus (strain 03BB102).